Reading from the N-terminus, the 1096-residue chain is cAMP/cGMP-dependent 3',5'-cAMP/cGMP phosphodiesterase B (1096 aa).

The segment at 216–248 (SSSKMIINDSPRTQQRNGTTEQQKKQQQQQYLQ) is disordered. A compositionally biased stretch (polar residues) spans 225–236 (SPRTQQRNGTTE). A divalent metal cation-binding residues include histidine 573, histidine 575, and aspartate 577. A nucleoside 3',5'-cyclic phosphate contacts are provided by residues 783 to 930 (VFSK…DLSH) and 946 to 1070 (ITQH…EDNI).

It belongs to the metallo-beta-lactamase superfamily. cNMP phosphodiesterase family. Mn(2+) is required as a cofactor. The cofactor is Mg(2+). Requires Zn(2+) as cofactor.

Its subcellular location is the cytoplasm. It is found in the cytosol. It catalyses the reaction 3',5'-cyclic AMP + H2O = AMP + H(+). The enzyme catalyses 3',5'-cyclic GMP + H2O = GMP + H(+). In terms of biological role, dual specificity cAMP and cGMP phosphodiesterase with marked preference for cyclic AMP, which is activated by cAMP and cGMP. Likely functions as a cAMP-stimulated cAMP-phosphodiesterase which may play a role in regulating the cAMP relay response. This chain is cAMP/cGMP-dependent 3',5'-cAMP/cGMP phosphodiesterase B (pdeE), found in Dictyostelium discoideum (Social amoeba).